Reading from the N-terminus, the 145-residue chain is Putative pre-16S rRNA nuclease (145 aa).

It belongs to the YqgF nuclease family.

The protein localises to the cytoplasm. Could be a nuclease involved in processing of the 5'-end of pre-16S rRNA. In Levilactobacillus brevis (strain ATCC 367 / BCRC 12310 / CIP 105137 / JCM 1170 / LMG 11437 / NCIMB 947 / NCTC 947) (Lactobacillus brevis), this protein is Putative pre-16S rRNA nuclease.